The following is a 346-amino-acid chain: Phosphoribosylformylglycinamidine cyclo-ligase (346 aa).

It belongs to the AIR synthase family.

The protein resides in the cytoplasm. The enzyme catalyses 2-formamido-N(1)-(5-O-phospho-beta-D-ribosyl)acetamidine + ATP = 5-amino-1-(5-phospho-beta-D-ribosyl)imidazole + ADP + phosphate + H(+). It functions in the pathway purine metabolism; IMP biosynthesis via de novo pathway; 5-amino-1-(5-phospho-D-ribosyl)imidazole from N(2)-formyl-N(1)-(5-phospho-D-ribosyl)glycinamide: step 2/2. This is Phosphoribosylformylglycinamidine cyclo-ligase from Proteus mirabilis (strain HI4320).